A 331-amino-acid polypeptide reads, in one-letter code: 3-dehydrosphinganine reductase TSC10B (331 aa).

The Lumenal segment spans residues 1-7 (MAAIFSL). A helical transmembrane segment spans residues 8–28 (FLFFILFIVSLLIILSFIVRP). Over 29–262 (RSVTIPIKFR…ICFDGIKAGK (234 aa)) the chain is Cytoplasmic. NADPH-binding residues include G44, S46, S47, G48, R69, K73, and D95. Positions 44-48 (GGSSG) match the GXSXG motif. S172 acts as the Proton donor in catalysis. Y186 serves as the catalytic Proton acceptor. Positions 186 and 190 each coordinate NADP(+). Residue K190 is the Lowers pKa of active site Tyr of the active site. Residues 263–283 (FTVTCHFIGFLLSIASTGMSP) form a helical membrane-spanning segment. Residues 284–286 (QGS) lie on the Lumenal side of the membrane. Residues 287-307 (FWLALTEVMFGGLIRLASLVF) traverse the membrane as a helical segment. Residues 308 to 331 (QWQWYKTIEKWSQRNKKEVNSKLA) lie on the Cytoplasmic side of the membrane.

Belongs to the short-chain dehydrogenases/reductases (SDR) family. In terms of tissue distribution, expressed in roots, leaves, stems and flowers.

It localises to the endoplasmic reticulum membrane. The catalysed reaction is sphinganine + NADP(+) = 3-oxosphinganine + NADPH + H(+). It functions in the pathway lipid metabolism; sphingolipid metabolism. Catalyzes the reduction of 3'-oxosphinganine (3-ketodihydrosphingosine/KDS) to sphinganine (dihydrosphingosine/DHS), the second step of de novo sphingolipid biosynthesis. In plants, sphingolipids seems to play a critical role in mineral ion homeostasis, most likely through their involvement in the ion transport functionalities of membrane systems in the root. Is stereospecific for D-erythro-DHS production and does not produce L-threo-DHS. This Arabidopsis thaliana (Mouse-ear cress) protein is 3-dehydrosphinganine reductase TSC10B (TSC10B).